A 391-amino-acid chain; its full sequence is Succinate--CoA ligase [ADP-forming] subunit beta (391 aa).

One can recognise an ATP-grasp domain in the interval 9-237; it reads RDLFEKHGVP…RATTDPLELR (229 aa). Residues Lys46, 53–55, Ala95, and Glu100 contribute to the ATP site; that span reads GRG. Residues Asn192 and Asp206 each coordinate Mg(2+). Residues Asn257 and 320–322 contribute to the substrate site; that span reads GIT.

The protein belongs to the succinate/malate CoA ligase beta subunit family. Heterotetramer of two alpha and two beta subunits. Mg(2+) serves as cofactor.

It carries out the reaction succinate + ATP + CoA = succinyl-CoA + ADP + phosphate. It catalyses the reaction GTP + succinate + CoA = succinyl-CoA + GDP + phosphate. The protein operates within carbohydrate metabolism; tricarboxylic acid cycle; succinate from succinyl-CoA (ligase route): step 1/1. In terms of biological role, succinyl-CoA synthetase functions in the citric acid cycle (TCA), coupling the hydrolysis of succinyl-CoA to the synthesis of either ATP or GTP and thus represents the only step of substrate-level phosphorylation in the TCA. The beta subunit provides nucleotide specificity of the enzyme and binds the substrate succinate, while the binding sites for coenzyme A and phosphate are found in the alpha subunit. The chain is Succinate--CoA ligase [ADP-forming] subunit beta from Cutibacterium acnes (strain DSM 16379 / KPA171202) (Propionibacterium acnes).